The sequence spans 129 residues: Mite allergen Blo t 21 (129 aa).

The signal sequence occupies residues 1–16; that stretch reads MKFIIALAALIAVACA.

The protein belongs to the mite group 5 allergen family. In terms of assembly, may exist as homodimer and homotrimer. As to expression, midgut and hindgut contents as well as fecal pellets (at protein level).

The chain is Mite allergen Blo t 21 from Blomia tropicalis (Mite).